We begin with the raw amino-acid sequence, 332 residues long: Invasin IpaD (332 aa).

Positions 1-25 (MNITTLTNSISTSSFSPNNTNGSST) are enriched in low complexity. Positions 1–43 (MNITTLTNSISTSSFSPNNTNGSSTETVNSDIKTTTSSHPVSS) are disordered. The segment covering 26–43 (ETVNSDIKTTTSSHPVSS) has biased composition (polar residues). Positions 44–77 (LTMLNDTLHNIRTTNQALKKELSQKTLTKTSLEE) form a coiled coil. The ipaB binding stretch occupies residues 192–267 (VKSLKDALTT…NRLDNLGGNG (76 aa)).

It belongs to the invasin protein D family.

The protein resides in the secreted. In terms of biological role, required for bacterial invasion of host cells. Controls IpaB and IpaC secretion, and the efficiency with which they are physically inserted into target cell membranes. These proteins are exported via T3SS to form a pore in the host membrane that allows the translocation of the other effectors into the host cytoplasm. Along with IpaB, is essential for both blocking secretion through the Mxi/Spa translocon in the absence of a secretion-inducing signal, and for controlling the level of secretion in the presence of this signal. The protein is Invasin IpaD (ipaD) of Shigella dysenteriae.